The chain runs to 223 residues: MSDQTPQFGQTPSEAEPDAVALEAGRKLFAGECTFFHGTQRLDQLPPPMGVEIAFAGRSNVGKSTLVNALTGRKTLARASSQPGRTKQLNFFNLADQLVLVDMPGYGYAQAAKDVKEDWQGLMFSYLRGRPNLRRVMLLVDARVEFKASDIAVMELLDKAAVTFQLVVTKADAVKPTPLQRRVADVYAAARAHPAAHPHVFVTSSDTGSGIAELRAALAGLTD.

An EngB-type G domain is found at 49-223; it reads MGVEIAFAGR…LRAALAGLTD (175 aa). GTP is bound by residues 57–64, 84–88, 102–105, 169–172, and 203–205; these read GRSNVGKS, GRTKQ, DMPG, TKAD, and TSS. The Mg(2+) site is built by serine 64 and threonine 86.

It belongs to the TRAFAC class TrmE-Era-EngA-EngB-Septin-like GTPase superfamily. EngB GTPase family. It depends on Mg(2+) as a cofactor.

Necessary for normal cell division and for the maintenance of normal septation. In Granulibacter bethesdensis (strain ATCC BAA-1260 / CGDNIH1), this protein is Probable GTP-binding protein EngB.